A 257-amino-acid chain; its full sequence is Probable ABC transporter arginine-binding protein ArtJ (257 aa).

The signal sequence occupies residues 1–23 (MCIKRKKTWIAFLAVVCSFCLTG). L-arginine contacts are provided by asparagine 41, glutamate 48, glycine 100, serine 102, arginine 107, and tyrosine 151.

It belongs to the bacterial solute-binding protein 3 family.

It is found in the secreted. The protein localises to the cell surface. Its function is as follows. Probably part of an ABC transporter complex involved in arginine transport. Binds arginine. Interacts with host epithelial cells, suggesting a role in host-cell adhesion during infection. This Chlamydia trachomatis serovar D (strain ATCC VR-885 / DSM 19411 / UW-3/Cx) protein is Probable ABC transporter arginine-binding protein ArtJ.